We begin with the raw amino-acid sequence, 93 residues long: Small ribosomal subunit protein uS19 (93 aa).

The segment at 73–93 is disordered; it reads EFSPTRTYRGHDKKDKKIQKK.

This sequence belongs to the universal ribosomal protein uS19 family.

Protein S19 forms a complex with S13 that binds strongly to the 16S ribosomal RNA. This chain is Small ribosomal subunit protein uS19, found in Phytoplasma mali (strain AT).